A 43-amino-acid chain; its full sequence is Parvalbumin beta (43 aa).

EF-hand domains lie at 1 to 20 and 22 to 43; these read KVFE…LKLF and LSSA…ALVK. The Ca(2+) site is built by Asp-7, Asp-9, Ser-11, Phe-12, Glu-14, Glu-16, and Glu-37.

Detected in muscle and cutaneous mucus. In the skin, detected in cells in the basal region of the glandular epithelium of the dermal mucus glands (at protein level).

It localises to the cytoplasm. The protein resides in the secreted. Its function is as follows. In muscle, parvalbumin is thought to be involved in relaxation after contraction. It binds two calcium ions. This is Parvalbumin beta from Rana temporaria (European common frog).